The primary structure comprises 471 residues: Glutamate--tRNA ligase (471 aa).

The 'HIGH' region motif lies at 9–19 (PSPTGYLHVGG). The short motif at 237-241 (KLSKR) is the 'KMSKS' region element. Position 240 (lysine 240) interacts with ATP.

Belongs to the class-I aminoacyl-tRNA synthetase family. Glutamate--tRNA ligase type 1 subfamily. In terms of assembly, monomer.

It localises to the cytoplasm. It catalyses the reaction tRNA(Glu) + L-glutamate + ATP = L-glutamyl-tRNA(Glu) + AMP + diphosphate. Catalyzes the attachment of glutamate to tRNA(Glu) in a two-step reaction: glutamate is first activated by ATP to form Glu-AMP and then transferred to the acceptor end of tRNA(Glu). This Pectobacterium atrosepticum (strain SCRI 1043 / ATCC BAA-672) (Erwinia carotovora subsp. atroseptica) protein is Glutamate--tRNA ligase.